Reading from the N-terminus, the 239-residue chain is MKIDILTLFPEMFAPLEHSIVGKAKEKGLLDIHYHNFRDYAEKARHVDDEPYGGGQGMLLRAQPIFDTIEQIEAKKPRIILLDPAGKPFTQAYAEELALEEELIFICGHYEGYDERIKTLVTDEISLGDFVLTGGELAAMTIVDATVRLIPQVLGKESSHQDDSFSSGLLEYPQYTRPYDYRGMTVPDVLMSGHHERIRLWRLEESLRKTYLRRPDLLERYDFSEEERKLLDKIKEALG.

S-adenosyl-L-methionine contacts are provided by residues G108 and 127–132; that span reads LGDFVL.

Belongs to the RNA methyltransferase TrmD family. As to quaternary structure, homodimer.

The protein resides in the cytoplasm. It catalyses the reaction guanosine(37) in tRNA + S-adenosyl-L-methionine = N(1)-methylguanosine(37) in tRNA + S-adenosyl-L-homocysteine + H(+). Specifically methylates guanosine-37 in various tRNAs. The chain is tRNA (guanine-N(1)-)-methyltransferase from Streptococcus pyogenes serotype M6 (strain ATCC BAA-946 / MGAS10394).